Reading from the N-terminus, the 535-residue chain is Glutamate--cysteine ligase (535 aa).

The protein belongs to the glutamate--cysteine ligase type 1 family. Type 1 subfamily.

It carries out the reaction L-cysteine + L-glutamate + ATP = gamma-L-glutamyl-L-cysteine + ADP + phosphate + H(+). The protein operates within sulfur metabolism; glutathione biosynthesis; glutathione from L-cysteine and L-glutamate: step 1/2. This Pseudomonas savastanoi pv. phaseolicola (strain 1448A / Race 6) (Pseudomonas syringae pv. phaseolicola (strain 1448A / Race 6)) protein is Glutamate--cysteine ligase.